We begin with the raw amino-acid sequence, 76 residues long: Bowman-Birk type proteinase inhibitor DE-4 (76 aa).

7 disulfides stabilise this stretch: C15–C69, C16–C31, C19–C65, C21–C29, C39–C46, C43–C58, and C48–C56.

It belongs to the Bowman-Birk serine protease inhibitor family.

The chain is Bowman-Birk type proteinase inhibitor DE-4 from Macrotyloma axillare (Perennial horse gram).